The sequence spans 311 residues: tRNA-cytidine(32) 2-sulfurtransferase (311 aa).

A PP-loop motif motif is present at residues 47-52; sequence SGGKDS. Positions 122, 125, and 213 each coordinate [4Fe-4S] cluster.

The protein belongs to the TtcA family. As to quaternary structure, homodimer. Mg(2+) is required as a cofactor. The cofactor is [4Fe-4S] cluster.

It localises to the cytoplasm. The catalysed reaction is cytidine(32) in tRNA + S-sulfanyl-L-cysteinyl-[cysteine desulfurase] + AH2 + ATP = 2-thiocytidine(32) in tRNA + L-cysteinyl-[cysteine desulfurase] + A + AMP + diphosphate + H(+). Its pathway is tRNA modification. In terms of biological role, catalyzes the ATP-dependent 2-thiolation of cytidine in position 32 of tRNA, to form 2-thiocytidine (s(2)C32). The sulfur atoms are provided by the cysteine/cysteine desulfurase (IscS) system. This Escherichia coli (strain SMS-3-5 / SECEC) protein is tRNA-cytidine(32) 2-sulfurtransferase.